The primary structure comprises 115 residues: Large ribosomal subunit protein bL20c (115 aa).

The protein belongs to the bacterial ribosomal protein bL20 family.

Its subcellular location is the plastid. It localises to the chloroplast. In terms of biological role, binds directly to 23S ribosomal RNA and is necessary for the in vitro assembly process of the 50S ribosomal subunit. It is not involved in the protein synthesizing functions of that subunit. This chain is Large ribosomal subunit protein bL20c, found in Pleurastrum terricola (Filamentous green alga).